A 1299-amino-acid polypeptide reads, in one-letter code: Tubulin polyglutamylase TTLL5 (1299 aa).

Residues 62-407 (RYHLSYKIVR…VCQDPAQRAS (346 aa)) form the TTL domain. ATP is bound by residues Lys-180, 186–187 (RG), 208–211 (SRYI), and 221–223 (KFD). Arg-186 lines the a protein pocket. Position 247 (Arg-247) interacts with L-glutamate. Residue 268–269 (TN) coordinates ATP. Tyr-270, Ser-271, and Lys-293 together coordinate L-glutamate. 3 residues coordinate Mg(2+): Asp-353, Glu-366, and Asn-368. A c-MTBD region region spans residues 378–488 (PLDLKIKASM…RGGFIRIFPT (111 aa)). Lys-384 lines the L-glutamate pocket. 5 disordered regions span residues 589–626 (EMNV…FLRE), 832–853 (GTHS…KGDH), 918–941 (SSVT…IPSA), 1088–1130 (RSSA…RSLQ), and 1217–1275 (SSAT…QLNG). Residues 597–617 (ESEEEEEVALDNEEEEQEASQ) are compositionally biased toward acidic residues. Positions 838-847 (SKNNNSYSDS) are enriched in low complexity. Polar residues-rich tracts occupy residues 1104–1130 (SGPT…RSLQ), 1217–1230 (SSAT…TTLP), and 1258–1275 (ATSQ…QLNG).

It belongs to the tubulin--tyrosine ligase family. Interacts with the transcriptional coactivators NCOA1/SRC-1 and NCOA2/TIF2. Mg(2+) is required as a cofactor.

Its subcellular location is the cell projection. It is found in the cilium. The protein localises to the cytoplasm. It localises to the cytoskeleton. The protein resides in the cilium basal body. Its subcellular location is the nucleus. The enzyme catalyses L-glutamyl-[protein] + L-glutamate + ATP = gamma-L-glutamyl-L-glutamyl-[protein] + ADP + phosphate + H(+). It carries out the reaction (L-glutamyl)(n)-gamma-L-glutamyl-L-glutamyl-[protein] + L-glutamate + ATP = (L-glutamyl)(n+1)-gamma-L-glutamyl-L-glutamyl-[protein] + ADP + phosphate + H(+). Its function is as follows. Polyglutamylase which modifies tubulin, generating polyglutamate side chains on the gamma-carboxyl group of specific glutamate residues within the C-terminal tail of tubulin. Preferentially mediates ATP-dependent initiation step of the polyglutamylation reaction over the elongation step. Preferentially modifies the alpha-tubulin tail over a beta-tail. Required for CCSAP localization to both polyglutamylated spindle and cilia microtubules. Increases the effects of transcriptional coactivator NCOA2/TIF2 in glucocorticoid receptor-mediated repression and induction and in androgen receptor-mediated induction. The sequence is that of Tubulin polyglutamylase TTLL5 (TTLL5) from Pongo abelii (Sumatran orangutan).